Reading from the N-terminus, the 374-residue chain is DNA-directed RNA polymerase subunit alpha (374 aa).

Residues 1 to 270 (MIFDEDSSSV…DQFQQFINFD (270 aa)) are alpha N-terminal domain (alpha-NTD). Residues 282–374 (KDVLPYDSNL…ESLSKQYSEE (93 aa)) form an alpha C-terminal domain (alpha-CTD) region.

This sequence belongs to the RNA polymerase alpha chain family. As to quaternary structure, homodimer. The RNAP catalytic core consists of 2 alpha, 1 beta, 1 beta' and 1 omega subunit. When a sigma factor is associated with the core the holoenzyme is formed, which can initiate transcription.

The catalysed reaction is RNA(n) + a ribonucleoside 5'-triphosphate = RNA(n+1) + diphosphate. Its function is as follows. DNA-dependent RNA polymerase catalyzes the transcription of DNA into RNA using the four ribonucleoside triphosphates as substrates. The protein is DNA-directed RNA polymerase subunit alpha of Ehrlichia ruminantium (strain Gardel).